The primary structure comprises 284 residues: D-tagatose-1,6-bisphosphate aldolase subunit GatY (284 aa).

The active-site Proton donor is the Asp-82. Positions 83 and 180 each coordinate Zn(2+). A dihydroxyacetone phosphate-binding site is contributed by Gly-181. His-208 provides a ligand contact to Zn(2+). Dihydroxyacetone phosphate contacts are provided by residues 209-211 and 230-233; these read GAS and NVAT.

The protein belongs to the class II fructose-bisphosphate aldolase family. TagBP aldolase GatY subfamily. As to quaternary structure, forms a complex with GatZ. Requires Zn(2+) as cofactor.

It catalyses the reaction D-tagatofuranose 1,6-bisphosphate = D-glyceraldehyde 3-phosphate + dihydroxyacetone phosphate. Its pathway is carbohydrate metabolism; D-tagatose 6-phosphate degradation; D-glyceraldehyde 3-phosphate and glycerone phosphate from D-tagatose 6-phosphate: step 2/2. In terms of biological role, catalytic subunit of the tagatose-1,6-bisphosphate aldolase GatYZ, which catalyzes the reversible aldol condensation of dihydroxyacetone phosphate (DHAP or glycerone-phosphate) with glyceraldehyde 3-phosphate (G3P) to produce tagatose 1,6-bisphosphate (TBP). Requires GatZ subunit for full activity and stability. Is involved in the catabolism of galactitol. This Salmonella newport (strain SL254) protein is D-tagatose-1,6-bisphosphate aldolase subunit GatY.